We begin with the raw amino-acid sequence, 384 residues long: Odorant receptor 33c (384 aa).

Residues 1-35 are Cytoplasmic-facing; the sequence is MVIIDSLSFYRPFWICMRLLVPTFFKDSSRPVQLY. The helical transmembrane segment at 36 to 56 threads the bilayer; it reads VVLLHILVTLWFPLHLLLHLL. Over 57–63 the chain is Extracellular; that stretch reads LLPSTAE. The chain crosses the membrane as a helical span at residues 64-84; it reads FFKNLTMSLTCVACSLKHVAH. Topologically, residues 85 to 128 are cytoplasmic; that stretch reads LYHLPQIVEIESLIEQLDTFIASEQEHRYYRDHVHCHARRFTRC. Residues 129 to 149 form a helical membrane-spanning segment; sequence LYISFGMIYALFLFGVFVQVI. At 150-169 the chain is on the extracellular side; the sequence is SGNWELLYPAYFPFDLESNR. The chain crosses the membrane as a helical span at residues 170–190; it reads FLGAVALGYQVFSMLVEGFQG. Over 191 to 251 the chain is Cytoplasmic; sequence LGNDTYTPLT…LVRFHNLVSR (61 aa). Residues 252-272 form a helical membrane-spanning segment; the sequence is TISEVQLVQLGGCGATLCIIV. Residues 273-274 are Extracellular-facing; sequence SY. A helical transmembrane segment spans residues 275–295; it reads MLFFVGDTISLVYYLVFFGVV. Over 296 to 358 the chain is Cytoplasmic; it reads CVQLFPSCYF…WIIKAGGLIE (63 aa). The chain crosses the membrane as a helical span at residues 359–379; the sequence is LNLNAFFATLKMAYSLFAVVV. Topologically, residues 380–384 are extracellular; it reads RAKGI.

Belongs to the insect chemoreceptor superfamily. Heteromeric odorant receptor channel (TC 1.A.69) family. Or2a subfamily. In terms of assembly, interacts with Orco. Complexes exist early in the endomembrane system in olfactory sensory neurons (OSNs), coupling these complexes to the conserved ciliary trafficking pathway. As to expression, expressed in the antenna and in a subset of 18 olfactory receptor neurons in the maxillary palp.

The protein resides in the cell membrane. Functionally, odorant receptor which mediates acceptance or avoidance behavior, depending on its substrates. The odorant receptor repertoire encodes a large collection of odor stimuli that vary widely in identity, intensity, and duration. May form a complex with Orco to form odorant-sensing units, providing sensitive and prolonged odorant signaling and calcium permeability. The sequence is that of Odorant receptor 33c (Or33c) from Drosophila melanogaster (Fruit fly).